We begin with the raw amino-acid sequence, 278 residues long: UPF0758 protein BURPS1106A_0984 (278 aa).

A disordered region spans residues 1–64; that stretch reads MQYEIVSAGE…ATAAARRGRD (64 aa). A compositionally biased stretch (low complexity) spans 22 to 59; the sequence is AAAPAAPSSAVPSSAALSSAALSSAAQPTGAPPATAAA. Positions 156–278 constitute an MPN domain; sequence LVDSPGAVDD…TFSFAQAGWI (123 aa). The Zn(2+) site is built by His-227, His-229, and Asp-240. The JAMM motif signature appears at 227–240; sequence HNHPSGAVRPSAAD.

Belongs to the UPF0758 family.

This Burkholderia pseudomallei (strain 1106a) protein is UPF0758 protein BURPS1106A_0984.